The chain runs to 126 residues: Aspartate 1-decarboxylase (126 aa).

S25 functions as the Schiff-base intermediate with substrate; via pyruvic acid in the catalytic mechanism. S25 is subject to Pyruvic acid (Ser). T57 provides a ligand contact to substrate. Y58 acts as the Proton donor in catalysis. A substrate-binding site is contributed by 73–75 (GAA).

The protein belongs to the PanD family. As to quaternary structure, heterooctamer of four alpha and four beta subunits. Pyruvate serves as cofactor. In terms of processing, is synthesized initially as an inactive proenzyme, which is activated by self-cleavage at a specific serine bond to produce a beta-subunit with a hydroxyl group at its C-terminus and an alpha-subunit with a pyruvoyl group at its N-terminus.

Its subcellular location is the cytoplasm. The catalysed reaction is L-aspartate + H(+) = beta-alanine + CO2. Its pathway is cofactor biosynthesis; (R)-pantothenate biosynthesis; beta-alanine from L-aspartate: step 1/1. In terms of biological role, catalyzes the pyruvoyl-dependent decarboxylation of aspartate to produce beta-alanine. This chain is Aspartate 1-decarboxylase, found in Salmonella arizonae (strain ATCC BAA-731 / CDC346-86 / RSK2980).